The following is a 509-amino-acid chain: Transcription factor SOX-9 (509 aa).

Disordered stretches follow at residues 1–66 (MNLL…ESEE) and 160–271 (RLRV…IDFR). Residues 27-41 (SEGSRGSPCPSGSGS) show a composition bias toward low complexity. The segment covering 42–52 (DTENTRPQENT) has biased composition (polar residues). Basic and acidic residues-rich tracts occupy residues 56–66 (GEPDLKKESEE) and 160–174 (RLRV…DYKY). A dimerization (DIM) region spans residues 63–103 (ESEEDKFPVCIREAVSQVLKGYDWTLVPMPVRVNGSSKNKP). The PQA stretch occupies residues 63 to 103 (ESEEDKFPVCIREAVSQVLKGYDWTLVPMPVRVNGSSKNKP). The residue at position 64 (serine 64) is a Phosphoserine. The HMG box DNA-binding region spans 105–173 (VKRPMNAFMV…QHKKDHPDYK (69 aa)). Serine 211 is modified (phosphoserine). Residues 224-307 (PGEHSGQSQG…LPPNGHPGVP (84 aa)) are transactivation domain (TAM). 2 short sequence motifs (9aaTAD) span residues 275–284 (IGELSSDVIS) and 290–298 (DVNEFDQYL). Disordered stretches follow at residues 335-415 (WMSK…QHSP) and 420-439 (YSPF…TRSQ). Over residues 341-359 (APPPPPHPPQQPPPVPQAP) the composition is skewed to pro residues. Low complexity predominate over residues 360-369 (AQPQAALPQQ). Residues 380-415 (HTLTTLSSEPGQSQRTHIKTEQLSPSHYSEQQQHSP) are compositionally biased toward polar residues. Residues 394–509 (RTHIKTEQLS…QPVYTQLTRP (116 aa)) are transactivation domain (TAC). A Glycyl lysine isopeptide (Lys-Gly) (interchain with G-Cter in ubiquitin) cross-link involves residue lysine 398. The short motif at 460 to 468 (SVLYSTFTY) is the 9aaTAD 3 element. Residues 479 to 509 (PIADTSGVPSIPQTHSPQHWEQPVYTQLTRP) are disordered. Polar residues predominate over residues 485-509 (GVPSIPQTHSPQHWEQPVYTQLTRP).

As to quaternary structure, homodimer; homodimerization is required for activity. Interacts (via C-terminus) with ZNF219; forming a complex that binds to the COL2A1 promoter and activates COL2A1 expression. Interacts with DDRGK1. Interacts with EP300/p300. Interacts with beta-catenin (CTNNB1); inhibiting CTNNB1 activity by competing with the binding sites of TCF/LEF within CTNNB1. Post-translationally, acetylated; acetylation impairs nuclear localization and ability to transactivate expression of target genes. Deacetylated by SIRT1. In terms of processing, phosphorylation at Ser-64 and Ser-211 by PKA increases transcriptional activity and may help delay chondrocyte maturation downstream of PTHLH/PTHrP signaling. Phosphorylation at either Ser-64 or Ser-211 is required for sumoylation, but phosphorylation is not dependent on sumoylation. Phosphorylated on tyrosine residues; tyrosine dephosphorylation by PTPN11/SHP2 blocks SOX9 phosphorylation by PKA and subsequent SUMOylation. Sumoylated; phosphorylation at either Ser-64 or Ser-211 is required for sumoylation. Sumoylation is induced by BMP signaling pathway. Post-translationally, ubiquitinated; ubiquitination leads to proteasomal degradation and is negatively regulated by DDRGK1.

The protein localises to the nucleus. Functionally, transcription factor that plays a key role in chondrocytes differentiation and skeletal development. Specifically binds the 5'-ACAAAG-3' DNA motif present in enhancers and super-enhancers and promotes expression of genes important for chondrogenesis, including cartilage matrix protein-coding genes COL2A1, COL4A2, COL9A1, COL11A2 and ACAN, SOX5 and SOX6. Also binds to some promoter regions. Plays a central role in successive steps of chondrocyte differentiation. Absolutely required for precartilaginous condensation, the first step in chondrogenesis during which skeletal progenitors differentiate into prechondrocytes. Together with SOX5 and SOX6, required for overt chondrogenesis when condensed prechondrocytes differentiate into early stage chondrocytes, the second step in chondrogenesis. Later, required to direct hypertrophic maturation and block osteoblast differentiation of growth plate chondrocytes: maintains chondrocyte columnar proliferation, delays prehypertrophy and then prevents osteoblastic differentiation of chondrocytes by lowering beta-catenin (CTNNB1) signaling and RUNX2 expression. Also required for chondrocyte hypertrophy, both indirectly, by keeping the lineage fate of chondrocytes, and directly, by remaining present in upper hypertrophic cells and transactivating COL10A1 along with MEF2C. Low lipid levels are the main nutritional determinant for chondrogenic commitment of skeletal progenitor cells: when lipids levels are low, FOXO (FOXO1 and FOXO3) transcription factors promote expression of SOX9, which induces chondrogenic commitment and suppresses fatty acid oxidation. Mechanistically, helps, but is not required, to remove epigenetic signatures of transcriptional repression and deposit active promoter and enhancer marks at chondrocyte-specific genes. Acts in cooperation with the Hedgehog pathway-dependent GLI (GLI1 and GLI3) transcription factors. In addition to cartilage development, also acts as a regulator of proliferation and differentiation in epithelial stem/progenitor cells: involved in the lung epithelium during branching morphogenesis, by balancing proliferation and differentiation and regulating the extracellular matrix. Controls epithelial branching during kidney development. In Sus scrofa (Pig), this protein is Transcription factor SOX-9 (SOX9).